A 581-amino-acid polypeptide reads, in one-letter code: Proline--tRNA ligase (581 aa).

It belongs to the class-II aminoacyl-tRNA synthetase family. ProS type 1 subfamily. In terms of assembly, homodimer.

The protein resides in the cytoplasm. The enzyme catalyses tRNA(Pro) + L-proline + ATP = L-prolyl-tRNA(Pro) + AMP + diphosphate. Functionally, catalyzes the attachment of proline to tRNA(Pro) in a two-step reaction: proline is first activated by ATP to form Pro-AMP and then transferred to the acceptor end of tRNA(Pro). As ProRS can inadvertently accommodate and process non-cognate amino acids such as alanine and cysteine, to avoid such errors it has two additional distinct editing activities against alanine. One activity is designated as 'pretransfer' editing and involves the tRNA(Pro)-independent hydrolysis of activated Ala-AMP. The other activity is designated 'posttransfer' editing and involves deacylation of mischarged Ala-tRNA(Pro). The misacylated Cys-tRNA(Pro) is not edited by ProRS. This Variovorax paradoxus (strain S110) protein is Proline--tRNA ligase.